A 314-amino-acid chain; its full sequence is Cyclic di-GMP binding protein TDE_0214 (314 aa).

In terms of domain architecture, PilZ spans 146–234; it reads QKRRNERVVI…KTVRTEPVEG (89 aa). Positions 288-300 are enriched in polar residues; that stretch reads TPVSSPIGTNTAP. A disordered region spans residues 288-314; the sequence is TPVSSPIGTNTAPLTPPPADSAPEQIS.

Its function is as follows. Cyclic-di-GMP binding protein that plays important roles in motility, chemotaxis, biofilm formation and virulence. This Treponema denticola (strain ATCC 35405 / DSM 14222 / CIP 103919 / JCM 8153 / KCTC 15104) protein is Cyclic di-GMP binding protein TDE_0214.